A 633-amino-acid polypeptide reads, in one-letter code: Endosomal/prevacuolar sodium/hydrogen exchanger (633 aa).

The first 21 residues, 1-21, serve as a signal peptide directing secretion; the sequence is MLSKVLLNIAFKVLLTTAKRA. The Lumenal portion of the chain corresponds to 22 to 61; that stretch reads VDPDDDDELLPSPDLPGSDDPIAGDPDVDLNPVTEEMFSS. The interval 25–44 is disordered; it reads DDDDELLPSPDLPGSDDPIA. Over residues 31-42 the composition is skewed to low complexity; sequence LPSPDLPGSDDP. The helical transmembrane segment at 62–82 threads the bilayer; sequence WALFIMLLLLISALWSSYYLT. The Cytoplasmic segment spans residues 83–85; sequence QKR. The helical transmembrane segment at 86 to 106 threads the bilayer; that stretch reads IRAVHETVLSIFYGMVIGLII. Over 107–117 the chain is Lumenal; it reads RMSPGHYIQDT. The chain crosses the membrane as a helical span at residues 118–138; it reads VTFNSSYFFNVLLPPIILNSG. Residues 124–133 carry the Amiloride-binding motif; it reads YFFNVLLPPI. Over 139-152 the chain is Cytoplasmic; sequence YELNQVNFFNNMLS. A helical membrane pass occupies residues 153 to 173; it reads ILIFAIPGTFISAVVIGIILY. The Lumenal portion of the chain corresponds to 174-189; the sequence is IWTFLGLESIDISFAD. The helical transmembrane segment at 190–211 threads the bilayer; it reads AMSVGATLSATDPVTILSIFNA. Over 212–217 the chain is Cytoplasmic; that stretch reads YKVDPK. The helical transmembrane segment at 218–238 threads the bilayer; it reads LYTIIFGESLLNDAISIVMFE. The Lumenal portion of the chain corresponds to 239 to 258; sequence TCQKFHGQPATFSSVFEGAG. A helical membrane pass occupies residues 259–279; that stretch reads LFLMTFSVSLLIGVLIGILVA. Over 280–288 the chain is Cytoplasmic; that stretch reads LLLKHTHIR. A helical membrane pass occupies residues 289–308; sequence RYPQIESCLILLIAYESYFF. At 309-313 the chain is on the lumenal side; the sequence is SNGCH. Residues 314 to 333 form a helical membrane-spanning segment; the sequence is MSGIVSLLFCGITLKHYAYY. The Cytoplasmic segment spans residues 334–344; sequence NMSRRSQITIK. Residues 345–364 form a helical membrane-spanning segment; the sequence is YIFQLLARLSENFIFIYLGL. Topologically, residues 365–376 are cytoplasmic; the sequence is ELFTEVELVYKP. A helical membrane pass occupies residues 377–397; it reads LLIIVAAISICVARWCAVFPL. Residues 398 to 431 lie on the Lumenal side of the membrane; the sequence is SQFVNWIYRVKTIRSMSGITGENISVPDEIPYNY. A glycan (N-linked (GlcNAc...) asparagine) is linked at Asn420. A helical transmembrane segment spans residues 432–452; it reads QMMTFWAGLRGAVGVALALGI. At 453–457 the chain is on the cytoplasmic side; sequence QGEYK. Residues 458 to 478 form a helical membrane-spanning segment; sequence FTLLATVLVVVVLTVIIFGGT. A Phosphothreonine modification is found at Thr490. Ser494 is subject to Phosphoserine. At Thr498 the chain carries Phosphothreonine. Position 499 is a phosphoserine (Ser499). 3 N-linked (GlcNAc...) asparagine glycosylation sites follow: Asn515, Asn550, and Asn563. Residues 553-578 form a disordered region; the sequence is TTGGNTFGGLNETENTSPNPARSSMD. Over residues 564–574 the composition is skewed to polar residues; the sequence is ETENTSPNPAR. Ser569 bears the Phosphoserine mark.

It belongs to the monovalent cation:proton antiporter 1 (CPA1) transporter (TC 2.A.36) family. In terms of assembly, interacts with CYP6.

It localises to the endosome membrane. The protein resides in the prevacuolar compartment membrane. Endosomal/prevacuolar electroneutral Na(+)/H(+) exchanger which mediates intracellular sequestration of Na(+) cations, regulates vacuolar pH and contributes to osmotolerance following sudden exposure to hyperosmotic media. Also contributes to the postdiauxic/stationary phase resistance to osmotic stress and allows for the continued growth of cells until the acquired osmotolerance response can occur. Involved in hygromycin resistance probably through its influence on the electrochemical proton gradient affecting secondarily the entrance of hygromycin. Mediates pH-dependent vesicle trafficking out of the endosome. Contributes to K(+) sequestration and homeostasis. This Saccharomyces cerevisiae (strain ATCC 204508 / S288c) (Baker's yeast) protein is Endosomal/prevacuolar sodium/hydrogen exchanger (NHX1).